The sequence spans 1021 residues: Transmembrane protein 132A (1021 aa).

The N-terminal stretch at Met1–Ser32 is a signal peptide. Topologically, residues Asn33–Ala848 are extracellular. The tract at residues Pro207–Gln226 is disordered. Asn276 carries N-linked (GlcNAc...) asparagine glycosylation. The binds to HSPA5/GRP78 stretch occupies residues Ile606–Pro913. Positions Leu666–Ser1021 are confers cellular localization similar to full-length form. The interval Ala793–Ala835 is disordered. Basic and acidic residues predominate over residues Gly806–Asn820. Residues Glu821–Met832 are compositionally biased toward acidic residues. Residues Leu849–Leu869 traverse the membrane as a helical segment. Residues Arg870–Ser1021 lie on the Cytoplasmic side of the membrane. The tract at residues Arg903–Gly955 is disordered. A compositionally biased stretch (polar residues) spans Asp929–Leu948.

This sequence belongs to the TMEM132 family. As to quaternary structure, interacts with HSPA5/GRP78. As to expression, expressed in the brain in neuronal cells of the hypothalamus, thalamus, cerebral cortex, amygdala, and cerebellum.

Its subcellular location is the golgi apparatus membrane. The protein localises to the endoplasmic reticulum membrane. Functionally, may play a role in embryonic and postnatal development of the brain. Increased resistance to cell death induced by serum starvation in cultured cells. Regulates cAMP-induced GFAP gene expression via STAT3 phosphorylation. This is Transmembrane protein 132A (Tmem132a) from Rattus norvegicus (Rat).